Consider the following 883-residue polypeptide: DNA double-strand break repair Rad50 ATPase (883 aa).

Residues arginine 12, 32–38 (NGSGKSS), and glutamine 134 each bind ATP. Positions 218–420 (ELRGELGGLE…EIGSRRGELK (203 aa)) form a coiled coil. The Zinc-hook domain occupies 395–492 (IQKARERKEE…ELVEVEKTLK (98 aa)). Zn(2+)-binding residues include cysteine 440 and cysteine 443. Coiled coils occupy residues 452–585 (RKEL…KKLG) and 620–741 (EDLL…LLKE). Residue 790 to 795 (FLSGGE) coordinates ATP.

It belongs to the SMC family. RAD50 subfamily. As to quaternary structure, homodimer. Forms a heterotetramer composed of two Mre11 subunits and two Rad50 subunits. Requires Zn(2+) as cofactor.

Functionally, part of the Rad50/Mre11 complex, which is involved in the early steps of DNA double-strand break (DSB) repair. The complex may facilitate opening of the processed DNA ends to aid in the recruitment of HerA and NurA. Rad50 controls the balance between DNA end bridging and DNA resection via ATP-dependent structural rearrangements of the Rad50/Mre11 complex. The protein is DNA double-strand break repair Rad50 ATPase of Thermococcus kodakarensis (strain ATCC BAA-918 / JCM 12380 / KOD1) (Pyrococcus kodakaraensis (strain KOD1)).